The primary structure comprises 582 residues: Potassium-transporting ATPase potassium-binding subunit (582 aa).

Transmembrane regions (helical) follow at residues 11–31 (AVFFTILAVLVFVAGEYLAWV), 81–101 (LKAVLVFNVCIWVLLFVVLMF), 148–168 (FGIGIAMFLTPATGLALMPAF), 195–215 (LLPISLLIAIILMAEGSVQTI), 272–292 (VLTLAMPIGTFSAIYAWGAWV), 298–318 (GVAIVAAFFVIYMALTGVAVV), 379–399 (ALGAFSLLFAFATNNISNGVG), 401–421 (GLLNILMFVILTAFIGALMIG), 439–459 (VFVVILVLPILVLIPQAAAVV), and 551–571 (GLLIGVIIIVSALVFLPALVF).

Belongs to the KdpA family. As to quaternary structure, the system is composed of three essential subunits: KdpA, KdpB and KdpC.

It localises to the cell membrane. Part of the high-affinity ATP-driven potassium transport (or Kdp) system, which catalyzes the hydrolysis of ATP coupled with the electrogenic transport of potassium into the cytoplasm. This subunit binds the extracellular potassium ions and delivers the ions to the membrane domain of KdpB through an intramembrane tunnel. The polypeptide is Potassium-transporting ATPase potassium-binding subunit (Halobacterium salinarum (strain ATCC 700922 / JCM 11081 / NRC-1) (Halobacterium halobium)).